Here is a 394-residue protein sequence, read N- to C-terminus: Elongation factor Tu (394 aa).

One can recognise a tr-type G domain in the interval 10–204 (KPHINVGTIG…YLDTYIPEPK (195 aa)). Positions 19 to 26 (GHVDHGKT) are G1. Position 19 to 26 (19 to 26 (GHVDHGKT)) interacts with GTP. Threonine 26 is a binding site for Mg(2+). Residues 60 to 64 (GITIN) form a G2 region. The interval 81 to 84 (DCPG) is G3. GTP-binding positions include 81–85 (DCPGH) and 136–139 (NKCD). Residues 136–139 (NKCD) form a G4 region. The segment at 174–176 (SAL) is G5.

The protein belongs to the TRAFAC class translation factor GTPase superfamily. Classic translation factor GTPase family. EF-Tu/EF-1A subfamily. In terms of assembly, monomer.

The protein resides in the cytoplasm. The catalysed reaction is GTP + H2O = GDP + phosphate + H(+). Its function is as follows. GTP hydrolase that promotes the GTP-dependent binding of aminoacyl-tRNA to the A-site of ribosomes during protein biosynthesis. This is Elongation factor Tu from Buchnera aphidicola subsp. Baizongia pistaciae (strain Bp).